Consider the following 634-residue polypeptide: Sodium-dependent multivitamin transporter (634 aa).

The next 12 membrane-spanning stretches (helical) occupy residues 23 to 43, 65 to 85, 100 to 120, 142 to 162, 175 to 195, 207 to 227, 255 to 275, 295 to 315, 350 to 370, 403 to 423, 427 to 447, and 455 to 475; these read FSVV…VIGL, MGCL…VAIL, FLGC…IPVF, ICGT…ALYA, LWLS…LGGL, LVMF…VGGL, FWTL…VNQA, AVFP…LVMF, LPGL…SSAF, FAYG…GSVL, LSIF…GLFF, and AIVG…GSIV. N-linked (GlcNAc...) asparagine glycosylation is found at N488 and N497. The helical transmembrane segment at 526–546 threads the bilayer; it reads LWYSAHNSTTVIVVGLIVSLL.

This sequence belongs to the sodium:solute symporter (SSF) (TC 2.A.21) family. Interacts with PDZD11. As to expression, expressed in the intestinal mucosa, liver and kidney (at protein level). Expressed in the colon.

Its subcellular location is the cell membrane. It localises to the apical cell membrane. It catalyses the reaction biotin(out) + 2 Na(+)(out) = biotin(in) + 2 Na(+)(in). It carries out the reaction (R)-pantothenate(out) + 2 Na(+)(out) = (R)-pantothenate(in) + 2 Na(+)(in). The enzyme catalyses (R)-lipoate(out) + 2 Na(+)(out) = (R)-lipoate(in) + 2 Na(+)(in). The catalysed reaction is iodide(out) + 2 Na(+)(out) = iodide(in) + 2 Na(+)(in). Sodium-dependent multivitamin transporter that mediates the electrogenic transport of pantothenate, biotin, lipoate and iodide. Functions as a Na(+)-coupled substrate symporter where the stoichiometry of Na(+):substrate is 2:1, creating an electrochemical Na(+) gradient used as driving force for substrate uptake. Required for biotin and pantothenate uptake in the intestine across the brush border membrane. Plays a role in the maintenance of intestinal mucosa integrity, by providing the gut mucosa with biotin. Contributes to the luminal uptake of biotin and pantothenate into the brain across the blood-brain barrier. This Mus musculus (Mouse) protein is Sodium-dependent multivitamin transporter.